The chain runs to 406 residues: Probable 4-hydroxyphenylpyruvate dioxygenase 2 (406 aa).

VOC domains lie at 22 to 174 and 205 to 363; these read GFDH…LINR and EIDH…IFSK. Fe cation contacts are provided by His208, His291, and Glu374.

The protein belongs to the 4HPPD family. It depends on Fe cation as a cofactor.

The catalysed reaction is 3-(4-hydroxyphenyl)pyruvate + O2 = homogentisate + CO2. It functions in the pathway amino-acid degradation; L-phenylalanine degradation; acetoacetate and fumarate from L-phenylalanine: step 3/6. This is Probable 4-hydroxyphenylpyruvate dioxygenase 2 from Aspergillus fumigatus (strain ATCC MYA-4609 / CBS 101355 / FGSC A1100 / Af293) (Neosartorya fumigata).